The sequence spans 787 residues: MEQNYTKIDHELPLIPLRGLAIFPYMILNFDIGREISLKALDQAMMDEELIFLTSQKEAEVDEPGEEDFYHVGTICKVKQMIKLPGDTVRVLVEGVSRGRVKKIEQEDGYFRAVIEEIVFDSDNLDSETEVEIEAFVRNVFDAFEEYINIGNRVSPEILISLADIEDVDRFIDTIAANIYLKSSQKQEILEEFDIRKRLELIYSILLEEIDILKIEKKITLRVKKQMNKVQKEYYLREQLKAIQKELGEEEDINSEADEYREKLKKIKAPKTTKEKIEKEIDKFSKISSMSPDVSVSRNYLDTIFSLPWNKETKDKLDITKAKDILDEDHYGLEKVKERILEYLAIRTLAKSLKGPIICLVGPPGTGKTSIVKSIARALNRKFVRISLGGVRDEAEIRGHRRTYVGSIPGRIINGVKEAQTKNPVFLFDEIDKMAADYKGDPASAMLEVLDPEQNKDFVDHYLEIPFDLSKILFVTTANSLGNIPRPLLDRMEVIEVSGYIEEEKLNIAKKYLLPKQIKEHALKENFIKIDDETLRSIINHYTREAGVRTLERTIGKICRKVAKKYVEDPTLEEVVINKSDLETYLGKDMFKYQLAEVNPQIGLVNGLAWTEVGGVTLEVEVNVLKGKGEIVLTGKLGDVMKESAKTGISYIRSIVDKFDIDPEFYKTNDIHIHIPEGAVPKDGPSAGITMALAVISALTKRPVPGNIAMTGEITLRGRVLAVGGVKEKLLAAHRAGITKVLIPKECEADLDEIPENVKEKMEFVLVEHMDEVLEQALLKSGENNEN.

In terms of domain architecture, Lon N-terminal spans 12-210 (LPLIPLRGLA…LIYSILLEEI (199 aa)). Residue 362–369 (GPPGTGKT) coordinates ATP. The Lon proteolytic domain maps to 599-780 (NPQIGLVNGL…DEVLEQALLK (182 aa)). Active-site residues include Ser-686 and Lys-729.

The protein belongs to the peptidase S16 family. In terms of assembly, homohexamer. Organized in a ring with a central cavity.

It is found in the cytoplasm. The enzyme catalyses Hydrolysis of proteins in presence of ATP.. In terms of biological role, ATP-dependent serine protease that mediates the selective degradation of mutant and abnormal proteins as well as certain short-lived regulatory proteins. Required for cellular homeostasis and for survival from DNA damage and developmental changes induced by stress. Degrades polypeptides processively to yield small peptide fragments that are 5 to 10 amino acids long. Binds to DNA in a double-stranded, site-specific manner. This Clostridioides difficile (strain 630) (Peptoclostridium difficile) protein is Lon protease.